Here is a 205-residue protein sequence, read N- to C-terminus: Isochorismatase domain-containing protein 2 (205 aa).

The protein belongs to the isochorismatase family.

The chain is Isochorismatase domain-containing protein 2 (isoc2) from Xenopus laevis (African clawed frog).